Here is a 397-residue protein sequence, read N- to C-terminus: Succinate--CoA ligase [ADP-forming] subunit beta (397 aa).

An ATP-grasp domain is found at 9–244 (KEIMKQYGIS…LTEEDPREVQ (236 aa)). Residues Lys46, 53 to 55 (GRG), Glu99, Leu102, and Glu107 contribute to the ATP site. Positions 199 and 213 each coordinate Mg(2+). Residues Asn264 and 321–323 (GIM) contribute to the substrate site.

Belongs to the succinate/malate CoA ligase beta subunit family. Heterotetramer of two alpha and two beta subunits. Requires Mg(2+) as cofactor.

The enzyme catalyses succinate + ATP + CoA = succinyl-CoA + ADP + phosphate. The catalysed reaction is GTP + succinate + CoA = succinyl-CoA + GDP + phosphate. It functions in the pathway carbohydrate metabolism; tricarboxylic acid cycle; succinate from succinyl-CoA (ligase route): step 1/1. Succinyl-CoA synthetase functions in the citric acid cycle (TCA), coupling the hydrolysis of succinyl-CoA to the synthesis of either ATP or GTP and thus represents the only step of substrate-level phosphorylation in the TCA. The beta subunit provides nucleotide specificity of the enzyme and binds the substrate succinate, while the binding sites for coenzyme A and phosphate are found in the alpha subunit. This is Succinate--CoA ligase [ADP-forming] subunit beta from Alkaliphilus metalliredigens (strain QYMF).